The chain runs to 76 residues: Large ribosomal subunit protein bL31 (76 aa).

Residues cysteine 16, cysteine 18, cysteine 36, and cysteine 39 each contribute to the Zn(2+) site.

This sequence belongs to the bacterial ribosomal protein bL31 family. Type A subfamily. In terms of assembly, part of the 50S ribosomal subunit. Zn(2+) is required as a cofactor.

Its function is as follows. Binds the 23S rRNA. The sequence is that of Large ribosomal subunit protein bL31 from Syntrophobacter fumaroxidans (strain DSM 10017 / MPOB).